A 155-amino-acid polypeptide reads, in one-letter code: Ribosome maturation factor RimP (155 aa).

The protein belongs to the RimP family.

The protein localises to the cytoplasm. Its function is as follows. Required for maturation of 30S ribosomal subunits. In Prochlorococcus marinus (strain MIT 9515), this protein is Ribosome maturation factor RimP.